The following is a 354-amino-acid chain: Isopentenyl-diphosphate delta-isomerase (354 aa).

11–12 (KK) serves as a coordination point for substrate. Residues Ser67, 68-70 (SMT), Ser98, and Asn126 contribute to the FMN site. 98 to 100 (SFK) lines the substrate pocket. Gln160 is a binding site for substrate. Glu161 contributes to the Mg(2+) binding site. FMN is bound by residues Lys192, Thr222, and 289–290 (AA).

Belongs to the IPP isomerase type 2 family. Homooctamer. Dimer of tetramers. FMN is required as a cofactor. Requires NADPH as cofactor. It depends on Mg(2+) as a cofactor.

The protein resides in the cytoplasm. It catalyses the reaction isopentenyl diphosphate = dimethylallyl diphosphate. Functionally, involved in the biosynthesis of isoprenoids. Catalyzes the 1,3-allylic rearrangement of the homoallylic substrate isopentenyl (IPP) to its allylic isomer, dimethylallyl diphosphate (DMAPP). This is Isopentenyl-diphosphate delta-isomerase from Borreliella afzelii (strain PKo) (Borrelia afzelii).